A 251-amino-acid chain; its full sequence is Triosephosphate isomerase (251 aa).

9 to 11 (NWK) serves as a coordination point for substrate. H94 acts as the Electrophile in catalysis. The active-site Proton acceptor is the E166. Residues G172, S211, and 232–233 (GG) contribute to the substrate site.

This sequence belongs to the triosephosphate isomerase family. As to quaternary structure, homodimer.

It is found in the cytoplasm. It carries out the reaction D-glyceraldehyde 3-phosphate = dihydroxyacetone phosphate. It participates in carbohydrate biosynthesis; gluconeogenesis. Its pathway is carbohydrate degradation; glycolysis; D-glyceraldehyde 3-phosphate from glycerone phosphate: step 1/1. Involved in the gluconeogenesis. Catalyzes stereospecifically the conversion of dihydroxyacetone phosphate (DHAP) to D-glyceraldehyde-3-phosphate (G3P). The sequence is that of Triosephosphate isomerase from Xanthomonas oryzae pv. oryzae (strain MAFF 311018).